Reading from the N-terminus, the 143-residue chain is Small ribosomal subunit protein uS12 (143 aa).

Pro-62 is modified (hydroxyproline).

This sequence belongs to the universal ribosomal protein uS12 family. As to quaternary structure, component of the 40S small ribosomal subunit.

The protein localises to the cytoplasm. It localises to the cytosol. Its subcellular location is the rough endoplasmic reticulum. The polypeptide is Small ribosomal subunit protein uS12 (RPS23) (Ciona intestinalis (Transparent sea squirt)).